Reading from the N-terminus, the 128-residue chain is Large ribosomal subunit protein eL22 (128 aa).

Thr62 carries the phosphothreonine modification. The residue at position 66 (Ser66) is a Phosphoserine. An N6-succinyllysine modification is found at Lys69.

The protein belongs to the eukaryotic ribosomal protein eL22 family. Component of the large ribosomal subunit.

It localises to the cytoplasm. Component of the large ribosomal subunit. The ribosome is a large ribonucleoprotein complex responsible for the synthesis of proteins in the cell. The polypeptide is Large ribosomal subunit protein eL22 (Rpl22) (Rattus norvegicus (Rat)).